The primary structure comprises 227 residues: MHFSFVTLFPNIIEGYFSDSILKRAIDDGKISIDFYNPRDLTTDKHNRVDAPMIGGGAGMLMTPQPLMDTLSKIKEESPEAHIVFLSPVAKPFIQNDAKRLVKKEHIVFVSGRYEGIDERVIERHADELFSIGDFILTGGELASMVLCDAVARNVEGVLGNSVSLEVESFEASLLEAPSFTKPINYENNEVVSEFLKGNHSKITDLKRGLALCKTKFFRPDLYKKKV.

S-adenosyl-L-methionine is bound by residues glycine 112 and 132 to 137 (IGDFIL).

It belongs to the RNA methyltransferase TrmD family. As to quaternary structure, homodimer.

It localises to the cytoplasm. It carries out the reaction guanosine(37) in tRNA + S-adenosyl-L-methionine = N(1)-methylguanosine(37) in tRNA + S-adenosyl-L-homocysteine + H(+). Its function is as follows. Specifically methylates guanosine-37 in various tRNAs. The protein is tRNA (guanine-N(1)-)-methyltransferase of Sulfurovum sp. (strain NBC37-1).